The chain runs to 106 residues: MDIWPEFQRDLEMYRDVVLSIKRNLRLYEECIESLVHQIGSTNFDNAQPLFDDLFRMQSELATMLYKYEYKPGKRIQDLIYHLDRDDFYSRKYWHKKFSDGLAWPE.

As to quaternary structure, forms a contact-dependent growth inhibition complex of CdiA-CT-NC101, CdiI-NC101 and EF-Tu; the complex is a dimer of heterotrimers.

In terms of biological role, immunity protein component of a toxin-immunity protein module, which functions as a cellular contact-dependent growth inhibition (CDI) system. CDI modules allow bacteria to communicate with and inhibit the growth of closely related neighboring bacteria in a contact-dependent fashion. Neutralizes the toxic activity of cognate toxin CdiA-NC101 (the C-terminal 154 residue CT fragment). Does not inhibit toxic activity of CdiA from other toxin-immunity modules or strains of E.coli. Mediates dimerization of the ternary CdiA-CT-NC101, CdiI-NC101 and EF-Tu complex; both CdiI molecules contact both EF-Tu molecules. The sequence is that of Immunity protein CdiI from Escherichia coli (strain NC101).